The sequence spans 177 residues: Nucleoside-triphosphatase THEP1 (177 aa).

ATP-binding positions include 10-17 (GKPGIGKT) and 101-108 (CLVIDEIG).

The protein belongs to the THEP1 NTPase family.

The enzyme catalyses a ribonucleoside 5'-triphosphate + H2O = a ribonucleoside 5'-diphosphate + phosphate + H(+). In terms of biological role, has nucleotide phosphatase activity towards ATP, GTP, CTP, TTP and UTP. May hydrolyze nucleoside diphosphates with lower efficiency. The chain is Nucleoside-triphosphatase THEP1 from Natranaerobius thermophilus (strain ATCC BAA-1301 / DSM 18059 / JW/NM-WN-LF).